The sequence spans 363 residues: Ankyrin repeat domain-containing protein 40 (363 aa).

M1 is modified (N-acetylmethionine). ANK repeat units follow at residues 9-38 and 43-72; these read EQQERLREAAALGDIREVQKLVESGVDVNS and NGWTCLHWACKRNHGQVVSYLLQSGADREI. Residues 135-167 form a disordered region; the sequence is DSTQLQNGGPSPPPVSPPADSSPPLLPPTETPL. The segment covering 144–164 has biased composition (pro residues); that stretch reads PSPPPVSPPADSSPPLLPPTE. S176 is subject to Phosphoserine.

This Mus musculus (Mouse) protein is Ankyrin repeat domain-containing protein 40 (Ankrd40).